We begin with the raw amino-acid sequence, 1070 residues long: DNA-directed RNA polymerase subunit beta (1070 aa).

The protein belongs to the RNA polymerase beta chain family. In plastids the minimal PEP RNA polymerase catalytic core is composed of four subunits: alpha, beta, beta', and beta''. When a (nuclear-encoded) sigma factor is associated with the core the holoenzyme is formed, which can initiate transcription.

Its subcellular location is the plastid. It localises to the chloroplast. The enzyme catalyses RNA(n) + a ribonucleoside 5'-triphosphate = RNA(n+1) + diphosphate. DNA-dependent RNA polymerase catalyzes the transcription of DNA into RNA using the four ribonucleoside triphosphates as substrates. This is DNA-directed RNA polymerase subunit beta from Liriodendron tulipifera (Tuliptree).